Here is a 229-residue protein sequence, read N- to C-terminus: Enolase-phosphatase E1 (229 aa).

Belongs to the HAD-like hydrolase superfamily. MasA/MtnC family. In terms of assembly, monomer. Requires Mg(2+) as cofactor.

It catalyses the reaction 5-methylsulfanyl-2,3-dioxopentyl phosphate + H2O = 1,2-dihydroxy-5-(methylsulfanyl)pent-1-en-3-one + phosphate. The protein operates within amino-acid biosynthesis; L-methionine biosynthesis via salvage pathway; L-methionine from S-methyl-5-thio-alpha-D-ribose 1-phosphate: step 3/6. It functions in the pathway amino-acid biosynthesis; L-methionine biosynthesis via salvage pathway; L-methionine from S-methyl-5-thio-alpha-D-ribose 1-phosphate: step 4/6. Bifunctional enzyme that catalyzes the enolization of 2,3-diketo-5-methylthiopentyl-1-phosphate (DK-MTP-1-P) into the intermediate 2-hydroxy-3-keto-5-methylthiopentenyl-1-phosphate (HK-MTPenyl-1-P), which is then dephosphorylated to form the acireductone 1,2-dihydroxy-3-keto-5-methylthiopentene (DHK-MTPene). This chain is Enolase-phosphatase E1, found in Yersinia pseudotuberculosis serotype IB (strain PB1/+).